The following is a 516-amino-acid chain: Ribose import ATP-binding protein RbsA (516 aa).

2 ABC transporter domains span residues 14 to 250 (LRLT…VGRA) and 261 to 504 (AKGA…AGIG). 46 to 53 (GENGAGKS) is a binding site for ATP.

Belongs to the ABC transporter superfamily. Ribose importer (TC 3.A.1.2.1) family. In terms of assembly, the complex is composed of an ATP-binding protein (RbsA), two transmembrane proteins (RbsC) and a solute-binding protein (RbsB).

Its subcellular location is the cell inner membrane. It catalyses the reaction D-ribose(out) + ATP + H2O = D-ribose(in) + ADP + phosphate + H(+). Part of the ABC transporter complex RbsABC involved in ribose import. Responsible for energy coupling to the transport system. This is Ribose import ATP-binding protein RbsA from Jannaschia sp. (strain CCS1).